Here is a 463-residue protein sequence, read N- to C-terminus: 3-phosphoshikimate 1-carboxyvinyltransferase (463 aa).

Residues Lys-26, Ser-27, and Arg-31 each contribute to the 3-phosphoshikimate site. Phosphoenolpyruvate is bound at residue Lys-26. Residues Gly-99 and Arg-127 each coordinate phosphoenolpyruvate. 3-phosphoshikimate is bound by residues Ser-163, Ser-164, Gln-165, Ser-188, Asp-300, and Lys-327. Gln-165 lines the phosphoenolpyruvate pocket. Asp-300 acts as the Proton acceptor in catalysis. Phosphoenolpyruvate contacts are provided by Arg-331 and Arg-372.

It belongs to the EPSP synthase family. In terms of assembly, monomer.

The protein resides in the cytoplasm. It carries out the reaction 3-phosphoshikimate + phosphoenolpyruvate = 5-O-(1-carboxyvinyl)-3-phosphoshikimate + phosphate. It participates in metabolic intermediate biosynthesis; chorismate biosynthesis; chorismate from D-erythrose 4-phosphate and phosphoenolpyruvate: step 6/7. Catalyzes the transfer of the enolpyruvyl moiety of phosphoenolpyruvate (PEP) to the 5-hydroxyl of shikimate-3-phosphate (S3P) to produce enolpyruvyl shikimate-3-phosphate and inorganic phosphate. This chain is 3-phosphoshikimate 1-carboxyvinyltransferase, found in Burkholderia pseudomallei (Pseudomonas pseudomallei).